An 80-amino-acid chain; its full sequence is Conotoxin VnMSGL-0123 (80 aa).

The first 20 residues, 1–20 (MSGLGIMVLTLLLLVSMATS), serve as a signal peptide directing secretion. The propeptide occupies 21–44 (HQDGGGKQATQRDAINVRRRRSIT). 3 disulfides stabilise this stretch: Cys-53/Cys-65, Cys-57/Cys-74, and Cys-64/Cys-78. Phe-79 carries the phenylalanine amide modification.

This sequence belongs to the conotoxin O3 superfamily. In terms of tissue distribution, expressed by the venom duct.

It localises to the secreted. In Conus ventricosus (Mediterranean cone), this protein is Conotoxin VnMSGL-0123.